Reading from the N-terminus, the 317-residue chain is Aspartate carbamoyltransferase catalytic subunit (317 aa).

Residues R64 and T65 each coordinate carbamoyl phosphate. K92 provides a ligand contact to L-aspartate. 3 residues coordinate carbamoyl phosphate: R114, H142, and Q145. L-aspartate-binding residues include R176 and R230. G271 and P272 together coordinate carbamoyl phosphate.

It belongs to the aspartate/ornithine carbamoyltransferase superfamily. ATCase family. In terms of assembly, heterododecamer (2C3:3R2) of six catalytic PyrB chains organized as two trimers (C3), and six regulatory PyrI chains organized as three dimers (R2).

The catalysed reaction is carbamoyl phosphate + L-aspartate = N-carbamoyl-L-aspartate + phosphate + H(+). The protein operates within pyrimidine metabolism; UMP biosynthesis via de novo pathway; (S)-dihydroorotate from bicarbonate: step 2/3. Catalyzes the condensation of carbamoyl phosphate and aspartate to form carbamoyl aspartate and inorganic phosphate, the committed step in the de novo pyrimidine nucleotide biosynthesis pathway. The polypeptide is Aspartate carbamoyltransferase catalytic subunit (Nitratidesulfovibrio vulgaris (strain DP4) (Desulfovibrio vulgaris)).